A 2809-amino-acid chain; its full sequence is Fibrillin-3 (2809 aa).

The signal sequence occupies residues 1 to 31 (MTLEGLYLARGPLARLLLAWSALLCMAGGQG). Positions 32–48 (RWDGALEAAGPGRVRRR) are excised as a propeptide. The region spanning 147–179 (GQPICDRGCHNGGRCIGPNRCACVYGFMGPQCE) is the EGF-like 1 domain. Cystine bridges form between Cys151–Cys161, Cys155–Cys167, and Cys169–Cys178. A TB 1 domain is found at 185–237 (GPCFGQVGPEGCQHQLTGLVCTKALCCATVGRAWGLPCELCPAQPHPCRRGFI). The region spanning 247–288 (DVDECQAVPGLCQGGSCVNMVGSFHCRCPVGHRLSDSSAACE) is the EGF-like 2; calcium-binding domain. Disulfide bonds link Cys251–Cys263, Cys258–Cys272, and Cys274–Cys287. The TB 2 domain occupies 293 to 346 (GACFSVLFGGRCAGDLAGHYTRRQCCCDRGRCWAAGPVPELCPPRGSNEFQQLC). Residue Asn406 is glycosylated (N-linked (GlcNAc...) asparagine). Positions 408–448 (TIDICRHFTNLCLNGRCLPTPSSYRCECNVGYTQDVRGECI) constitute an EGF-like 3 domain. 15 disulfides stabilise this stretch: Cys412-Cys424, Cys419-Cys433, Cys435-Cys447, Cys453-Cys463, Cys458-Cys472, Cys474-Cys487, Cys493-Cys505, Cys500-Cys514, Cys516-Cys529, Cys535-Cys546, Cys541-Cys555, Cys557-Cys570, Cys576-Cys587, Cys582-Cys596, and Cys598-Cys611. One can recognise an EGF-like 4; calcium-binding domain in the interval 449-488 (DVDECTSSPCHHGDCVNIPGTYHCRCYPGFQATPTRQACV). The 42-residue stretch at 489–530 (DVDECIVSGGLCHLGRCVNTEGSFQCVCNAGFELSPDGKNCV) folds into the EGF-like 5; calcium-binding domain. The 41-residue stretch at 531-571 (DHNECATSTMCVNGVCLNEDGSFSCLCKPGFLLAPGGHYCM) folds into the EGF-like 6; calcium-binding domain. The EGF-like 7; calcium-binding domain occupies 572 to 612 (DIDECQTPGICVNGHCTNTEGSFRCQCLGGLAVGTDGRVCV). The TB 3 domain occupies 618 to 670 (STCYGAIEKGSCARPFPGTVTKSECCCANPDHGFGEPCQLCPAKDSAEFQALC). The region spanning 682–723 (DINECALDPEVCANGVCENLRGSYRCVCNLGYEAGASGKDCT) is the EGF-like 8; calcium-binding domain. Disulfide bonds link Cys686/Cys698, Cys693/Cys707, Cys709/Cys722, Cys728/Cys740, Cys735/Cys749, Cys751/Cys764, Cys770/Cys780, Cys775/Cys789, and Cys791/Cys804. In terms of domain architecture, EGF-like 9; calcium-binding spans 724 to 765 (DVDECALNSLLCDNGWCQNSPGSYSCSCPPGFHFWQDTEICK). Positions 766-805 (DVDECLSSPCVSGVCRNLAGSYTCKCGPGSRLDPSGTFCL) constitute an EGF-like 10; calcium-binding domain. In terms of domain architecture, TB 4 spans 810-861 (GTCWLKIQESRCEVNLQGASLRSECCATLGAAWGSPCERCEIDPACARGFAR). In terms of domain architecture, EGF-like 11; calcium-binding spans 869–910 (DVNECESFPGVCPNGRCVNTAGSFRCECPEGLMLDASGRLCV). 3 disulfide bridges follow: Cys873/Cys885, Cys880/Cys894, and Cys896/Cys909. Residues 915–966 (EPCFLRWDEDECGVTLPGKYRMDVCCCSIGAVWGVECEACPDPESLEFASLC) enclose the TB 5 domain. One can recognise an EGF-like 12; calcium-binding domain in the interval 986 to 1027 (DVNECKVFPGLCTHGTCRNTVGSFHCACAGGFALDAQERNCT). Disulfide bonds link Cys990/Cys1002, Cys997/Cys1011, Cys1013/Cys1026, Cys1032/Cys1044, Cys1039/Cys1053, Cys1055/Cys1069, Cys1075/Cys1087, Cys1082/Cys1096, Cys1098/Cys1111, Cys1117/Cys1129, Cys1124/Cys1138, Cys1140/Cys1153, Cys1159/Cys1170, Cys1166/Cys1179, Cys1181/Cys1194, Cys1200/Cys1212, Cys1207/Cys1221, Cys1223/Cys1236, Cys1242/Cys1254, Cys1249/Cys1263, Cys1265/Cys1278, Cys1284/Cys1297, Cys1291/Cys1306, Cys1308/Cys1319, Cys1325/Cys1338, Cys1332/Cys1347, Cys1349/Cys1360, Cys1366/Cys1378, Cys1373/Cys1387, Cys1389/Cys1402, Cys1408/Cys1419, Cys1414/Cys1428, Cys1430/Cys1443, Cys1449/Cys1460, Cys1455/Cys1469, and Cys1471/Cys1484. Asn1025 carries an N-linked (GlcNAc...) asparagine glycan. One can recognise an EGF-like 13; calcium-binding domain in the interval 1028–1070 (DIDECRISPDLCGQGTCVNTPGSFECECFPGYESGFMLMKNCM). The EGF-like 14; calcium-binding domain occupies 1071–1112 (DVDECARDPLLCRGGTCTNTDGSYKCQCPPGHELTAKGTACE). The EGF-like 15; calcium-binding domain occupies 1113 to 1154 (DIDECSLSDGLCPHGQCVNVIGAFQCSCHAGFQSTPDRQGCV). In terms of domain architecture, EGF-like 16; calcium-binding spans 1155–1195 (DINECRVQNGGCDVHCINTEGSYRCSCGQGYSLMPDGRACA). Residues 1196–1237 (DVDECEENPRVCDQGHCTNMPGGHRCLCYDGFMATPDMRTCV) enclose the EGF-like 17 domain. The EGF-like 18; calcium-binding domain maps to 1238-1279 (DVDECDLNPHICLHGDCENTKGSFVCHCQLGYMVRKGATGCS). In terms of domain architecture, EGF-like 19; calcium-binding spans 1280–1320 (DVDECEVGGHNCDSHASCLNIPGSFSCRCLPGWVGDGFECH). The EGF-like 20; calcium-binding domain occupies 1321-1361 (DLDECVSQEHRCSPRGDCLNVPGSYRCTCRQGFAGDGFFCE). The EGF-like 21; calcium-binding domain maps to 1362–1403 (DRDECAENVDLCDNGQCLNAPGGYRCECEMGFDPTEDHRACQ). Positions 1404–1444 (DVDECAQGNLCAFGSCENLPGMFRCICNGGYELDRGGGNCT) constitute an EGF-like 22; calcium-binding domain. N-linked (GlcNAc...) asparagine glycosylation occurs at Asn1442. In terms of domain architecture, EGF-like 23; calcium-binding spans 1445-1485 (DINECADPVNCINGVCINTPGSYLCSCPQDFELNPSGVGCV). Residues 1490-1546 (GNCFLETHDRGDSGISCSAEIGVGVTRASCCCSLGRAWGNPCELCPMANTTEYRTLC) form the TB 6 domain. Asn1538 is a glycosylation site (N-linked (GlcNAc...) asparagine). An EGF-like 24; calcium-binding domain is found at 1563 to 1604 (DIDECQELPGLCQGGDCVNTFGSFQCECPPGYHLSEHTRICE). 6 disulfides stabilise this stretch: Cys1567/Cys1579, Cys1574/Cys1588, Cys1590/Cys1603, Cys1609/Cys1621, Cys1616/Cys1630, and Cys1632/Cys1645. The EGF-like 25; calcium-binding domain maps to 1605–1646 (DIDECSTHSGICGPGTCYNTLGNYTCVCPAEYLQVNGGNNCM). A glycan (N-linked (GlcNAc...) asparagine) is linked at Asn1627. The 53-residue stretch at 1651 to 1703 (SVCFRHYNGTCQNELAFNVTRKMCCCSYNIGQAWNRPCEACPTPISPDYQILC) folds into the TB 7 domain. N-linked (GlcNAc...) asparagine glycosylation is found at Asn1658 and Asn1668. Residues 1721–1762 (DIDECGEIPAICANGICINQIGSFRCECPAGFNYNSILLACE) form the EGF-like 26; calcium-binding domain. Disulfide bonds link Cys1725-Cys1737, Cys1732-Cys1746, Cys1748-Cys1761, Cys1767-Cys1780, Cys1774-Cys1789, Cys1791-Cys1803, Cys1809-Cys1821, Cys1816-Cys1830, Cys1832-Cys1845, Cys1851-Cys1861, Cys1856-Cys1870, Cys1872-Cys1884, Cys1890-Cys1903, Cys1898-Cys1912, Cys1914-Cys1927, Cys1933-Cys1945, Cys1940-Cys1954, Cys1956-Cys1967, Cys1973-Cys1985, Cys1980-Cys1994, and Cys1996-Cys2009. The 42-residue stretch at 1763–1804 (DVDECGSRESPCQQNADCINIPGSYRCKCTRGYKLSPGGACV) folds into the EGF-like 27; calcium-binding domain. Residues 1805 to 1846 (GRNECREIPNVCSHGDCMDTEGSYMCLCHRGFQASADQTLCM) form the EGF-like 28 domain. The 39-residue stretch at 1847 to 1885 (DIDECDRQPCGNGTCKNIIGSYNCLCFPGFVVTHNGDCV) folds into the EGF-like 29; calcium-binding domain. Residue Asn1858 is glycosylated (N-linked (GlcNAc...) asparagine). An EGF-like 30; calcium-binding domain is found at 1886–1928 (DFDECTTLVGQVCRFGHCLNTAGSFHCLCQDGFELTADGKNCV). One can recognise an EGF-like 31; calcium-binding domain in the interval 1929 to 1968 (DTNECLSLAGTCLPGTCQNLEGSFRCICPPGFQVQSDHCI). The 42-residue stretch at 1969 to 2010 (DIDECSEEPNLCLFGTCTNSPGSFQCLCPPGFVLSDNGHRCF) folds into the EGF-like 32; calcium-binding domain. The TB 8 domain occupies 2015–2068 (SFCFTRFEAGKCSVPKAFNTTKTRCCCSKRPGEGWGDPCELCPQEGSAAFQELC). A glycan (N-linked (GlcNAc...) asparagine) is linked at Asn2033. The region spanning 2084 to 2125 (DVNECAENPGVCTNGVCVNTDGSFRCECPFGYSLDFTGINCV) is the EGF-like 33; calcium-binding domain. Intrachain disulfides connect Cys2088–Cys2100, Cys2095–Cys2109, Cys2111–Cys2124, Cys2130–Cys2141, Cys2136–Cys2150, Cys2152–Cys2164, Cys2170–Cys2181, Cys2177–Cys2190, Cys2192–Cys2205, Cys2211–Cys2225, Cys2218–Cys2234, Cys2236–Cys2250, Cys2256–Cys2268, Cys2263–Cys2277, and Cys2279–Cys2292. The EGF-like 34; calcium-binding domain maps to 2126–2165 (DTDECSVGHPCGQGTCTNVIGGFECACADGFEPGLMMTCE). The region spanning 2166-2206 (DIDECSLNPLLCAFRCHNTEGSYLCTCPAGYTLREDGAMCR) is the EGF-like 35; calcium-binding domain. The EGF-like 36; calcium-binding domain occupies 2207-2251 (DVDECADGQQDCHARGMECKNLIGTFACVCPPGMRPLPGSGEGCT). The EGF-like 37; calcium-binding domain occupies 2252 to 2293 (DDNECHAQPDLCVNGRCVNTAGSFRCDCDEGFQPSPTLTECH). A TB 9 domain is found at 2298–2351 (GPCFAEVLQTMCRSLSSSSEAVTRAECCCGGGRGWGPRCELCPLPGTSAYRKLC). Positions 2363–2404 (DVDECRMLAHLCAHGECINSLGSFRCHCQAGYTPDATATTCL) constitute an EGF-like 38; calcium-binding domain. Disulfide bonds link Cys2367-Cys2379, Cys2374-Cys2388, Cys2390-Cys2403, Cys2409-Cys2420, Cys2416-Cys2429, Cys2431-Cys2444, Cys2450-Cys2461, Cys2457-Cys2470, Cys2472-Cys2483, Cys2489-Cys2502, Cys2496-Cys2511, Cys2513-Cys2526, Cys2532-Cys2542, Cys2538-Cys2551, Cys2553-Cys2566, Cys2572-Cys2584, Cys2579-Cys2593, Cys2595-Cys2608, Cys2614-Cys2625, Cys2621-Cys2634, and Cys2636-Cys2648. Residues 2405-2445 (DMDECSQVPKPCTFLCKNTKGSFLCSCPRGYLLEEDGRTCK) enclose the EGF-like 39; calcium-binding domain. One can recognise an EGF-like 40; calcium-binding domain in the interval 2446 to 2484 (DLDECTSRQHNCQFLCVNTVGAFTCRCPPGFTQHHQACF). The EGF-like 41; calcium-binding domain occupies 2485-2527 (DNDECSAQPGPCGAHGHCHNTPGSFRCECHQGFTLVSSGHGCE). The EGF-like 42; calcium-binding domain maps to 2528–2567 (DVNECDGPHRCQHGCQNQLGGYRCSCPQGFTQHSQWAQCV). One can recognise an EGF-like 43; calcium-binding domain in the interval 2568-2609 (DENECALSPPTCGSASCRNTLGGFRCVCPSGFDFDQALGGCQ). The region spanning 2610–2649 (EVDECAGRRGPCSYSCANTPGGFLCGCPQGYFRAGQGHCV) is the EGF-like 44; calcium-binding domain. Asn2713 carries N-linked (GlcNAc...) asparagine glycosylation.

This sequence belongs to the fibrillin family. In terms of processing, probably forms intermolecular disulfide bonds either with other FBN3 molecules or with other components of the microfibrils. In terms of tissue distribution, predominantly expressed in connective tissues such as skeletal muscle, tendon, skin, perichondrium and periosteum. Highly expressed in fetal lung, brain, kidney. Expressed at low level in prostate, testis, mammary gland, uterus, ovary, placenta, bladder, adrenal gland, thyroid, fetal thymus, fetal liver, liver, fetal heart and heart.

Its subcellular location is the secreted. It is found in the extracellular space. The protein localises to the extracellular matrix. Its function is as follows. Fibrillins are structural components of 10-12 nm extracellular calcium-binding microfibrils, which occur either in association with elastin or in elastin-free bundles. Fibrillin-containing microfibrils provide long-term force bearing structural support. This is Fibrillin-3 (FBN3) from Homo sapiens (Human).